A 377-amino-acid polypeptide reads, in one-letter code: Ribosomal RNA large subunit methyltransferase G (377 aa).

The protein belongs to the methyltransferase superfamily. RlmG family.

The protein localises to the cytoplasm. It catalyses the reaction guanosine(1835) in 23S rRNA + S-adenosyl-L-methionine = N(2)-methylguanosine(1835) in 23S rRNA + S-adenosyl-L-homocysteine + H(+). In terms of biological role, specifically methylates the guanine in position 1835 (m2G1835) of 23S rRNA. This chain is Ribosomal RNA large subunit methyltransferase G, found in Shewanella sp. (strain ANA-3).